The chain runs to 1687 residues: Vitellogenin-2 (1687 aa).

Residues 1–15 form the signal peptide; that stretch reads MRVLVLALTVALVAG. One can recognise a Vitellogenin domain in the interval 24-663; it reads FAPGKTYEYK…DAATVLPKNI (640 aa). 6 N-linked (GlcNAc...) asparagine glycosylation sites follow: asparagine 941, asparagine 945, asparagine 954, asparagine 1004, asparagine 1019, and asparagine 1083. The interval 1081 to 1174 is disordered; sequence LKNSTKASSS…SSSSSKTKWQ (94 aa). Residues 1088 to 1127 show a composition bias toward low complexity; the sequence is SSSSSGSSRSSRSRSSSSSSSSSSSSSSRSSSSSSRSSSS. N-linked (GlcNAc...) asparagine glycosylation occurs at asparagine 1142. Positions 1148–1169 are enriched in low complexity; the sequence is SSSSSSSSSSSSSSSSSSSSSS. Asparagine 1179, asparagine 1257, asparagine 1292, asparagine 1342, asparagine 1361, asparagine 1366, and asparagine 1390 each carry an N-linked (GlcNAc...) asparagine glycan. Positions 1417–1593 constitute a VWFD domain; that stretch reads AECTVVEDTV…SWVLPAKSCR (177 aa). Intrachain disulfides connect cysteine 1419–cysteine 1556 and cysteine 1442–cysteine 1592. Residues asparagine 1577 and asparagine 1655 are each glycosylated (N-linked (GlcNAc...) asparagine).

In terms of processing, phosvitin, an egg yolk storage protein, is one of the most highly phosphorylated (10%) proteins in nature. Produced by the liver, secreted into the blood and then sequestered by receptor mediated endocytosis into growing oocytes, where it is generally cleaved, giving rise to the respective yolk components lipovitellins and phosvitin.

Functionally, precursor of the egg-yolk proteins that are sources of nutrients during early development of oviparous organisms. The polypeptide is Vitellogenin-2 (Fundulus heteroclitus (Killifish)).